A 124-amino-acid polypeptide reads, in one-letter code: Protein BEX3 (124 aa).

A disordered region spans residues 1–56 (MANVHQENEEMEQPLQNGQEDRPVGGGEGHQPAANNNNNNHNHNHNHHRRGQARRL). Positions 42–53 (NHNHNHHRRGQA) are enriched in basic residues. Residues 81-106 (EMFMEEMREIRRKLRELQLRNCLRIL) form an interaction with p75NTR/NGFR region. An interaction with 14-3-3 epsilon region spans residues 81 to 124 (EMFMEEMREIRRKLRELQLRNCLRILMGELSNHHDHHDEFCLMP). The Nuclear export signal motif lies at 90–100 (IRRKLRELQLR). The interval 113–117 (HHDHH) is his cluster. Cysteine 121 is a Zn(2+) binding site.

Belongs to the BEX family. In terms of assembly, self-associates. Binds to the DEATH domain of p75NTR/NGFR. Interacts with 14-3-3 epsilon (YWHAE). Interacts with DIABLO/SMAC. Ubiquitinated. Degraded by the proteasome. In terms of tissue distribution, widely expressed.

The protein resides in the nucleus. The protein localises to the cytoplasm. It is found in the cytosol. May be a signaling adapter molecule involved in NGFR/p75NTR-mediated apoptosis induced by NGF. Plays a role in zinc-triggered neuronal death. In absence of reductive stress, acts as a pseudosubstrate for the CRL2(FEM1B) complex: associates with FEM1B via zinc, thereby preventing association between FEM1B and its substrates. This Mus musculus (Mouse) protein is Protein BEX3.